Here is a 191-residue protein sequence, read N- to C-terminus: Elongation factor P (191 aa).

It belongs to the elongation factor P family.

Its subcellular location is the cytoplasm. Its pathway is protein biosynthesis; polypeptide chain elongation. Its function is as follows. Involved in peptide bond synthesis. Stimulates efficient translation and peptide-bond synthesis on native or reconstituted 70S ribosomes in vitro. Probably functions indirectly by altering the affinity of the ribosome for aminoacyl-tRNA, thus increasing their reactivity as acceptors for peptidyl transferase. The chain is Elongation factor P from Bartonella henselae (strain ATCC 49882 / DSM 28221 / CCUG 30454 / Houston 1) (Rochalimaea henselae).